Consider the following 117-residue polypeptide: Large ribosomal subunit protein bL20c (117 aa).

It belongs to the bacterial ribosomal protein bL20 family.

Its subcellular location is the plastid. It is found in the chloroplast. Its function is as follows. Binds directly to 23S ribosomal RNA and is necessary for the in vitro assembly process of the 50S ribosomal subunit. It is not involved in the protein synthesizing functions of that subunit. This Buxus microphylla (Littleleaf boxwood) protein is Large ribosomal subunit protein bL20c.